Here is a 196-residue protein sequence, read N- to C-terminus: Small ribosomal subunit protein uS4c (196 aa).

A disordered region spans residues 17–36; it reads ALPGLTRKTPKSGSNLKKKF. The 62-residue stretch at 89–150 folds into the S4 RNA-binding domain; sequence MRLDNILFRL…NQRSKRLIQN (62 aa).

This sequence belongs to the universal ribosomal protein uS4 family. Part of the 30S ribosomal subunit. Contacts protein S5. The interaction surface between S4 and S5 is involved in control of translational fidelity.

Its subcellular location is the plastid. It localises to the chloroplast. Functionally, one of the primary rRNA binding proteins, it binds directly to 16S rRNA where it nucleates assembly of the body of the 30S subunit. Its function is as follows. With S5 and S12 plays an important role in translational accuracy. The polypeptide is Small ribosomal subunit protein uS4c (rps4) (Phyllostachys flexuosa (Drooping timber bamboo)).